The chain runs to 447 residues: Glyceraldehyde-3-phosphate dehydrogenase GAPB, chloroplastic (447 aa).

A chloroplast-targeting transit peptide spans 1-80 (MATHAALAVS…STPVRGETVA (80 aa)). NADP(+)-binding positions include 91–92 (RI), Asp-115, and Arg-160. D-glyceraldehyde 3-phosphate is bound by residues 234–236 (SCT), Thr-265, Arg-280, 293–294 (TG), and Arg-316. Cys-235 acts as the Nucleophile in catalysis. Asn-399 contacts NADP(+).

It belongs to the glyceraldehyde-3-phosphate dehydrogenase family. Tetramer of either four A chains (GAPDH 2) or two A and two B chains (GAPDH 1). Expressed in leaves and stems.

It is found in the plastid. It localises to the chloroplast membrane. The protein resides in the chloroplast stroma. It carries out the reaction D-glyceraldehyde 3-phosphate + phosphate + NADP(+) = (2R)-3-phospho-glyceroyl phosphate + NADPH + H(+). Its pathway is carbohydrate biosynthesis; Calvin cycle. Involved in the photosynthetic reductive pentose phosphate pathway (Calvin-Benson cycle). Catalyzes the reduction of 1,3-diphosphoglycerate by NADPH. This chain is Glyceraldehyde-3-phosphate dehydrogenase GAPB, chloroplastic (GAPB), found in Arabidopsis thaliana (Mouse-ear cress).